The sequence spans 206 residues: LexA repressor (206 aa).

A DNA-binding region (H-T-H motif) is located at residues 28 to 48 (RAEIARRLGFKSANAAEEHLK). Active-site for autocatalytic cleavage activity residues include S123 and K160.

This sequence belongs to the peptidase S24 family. As to quaternary structure, homodimer.

It carries out the reaction Hydrolysis of Ala-|-Gly bond in repressor LexA.. Its function is as follows. Represses a number of genes involved in the response to DNA damage (SOS response), including recA and lexA. In the presence of single-stranded DNA, RecA interacts with LexA causing an autocatalytic cleavage which disrupts the DNA-binding part of LexA, leading to derepression of the SOS regulon and eventually DNA repair. This Shewanella pealeana (strain ATCC 700345 / ANG-SQ1) protein is LexA repressor.